The primary structure comprises 150 residues: Transcriptional repressor NrdR (150 aa).

A zinc finger spans residues 3 to 33 (CPYCTGESAVIDTRELDNGETIRRRRRCKHC). The ATP-cone domain occupies 48–138 (VMVVKKNGDR…VYRSFSDLGK (91 aa)).

This sequence belongs to the NrdR family. It depends on Zn(2+) as a cofactor.

Functionally, negatively regulates transcription of bacterial ribonucleotide reductase nrd genes and operons by binding to NrdR-boxes. The polypeptide is Transcriptional repressor NrdR (Herpetosiphon aurantiacus (strain ATCC 23779 / DSM 785 / 114-95)).